The following is a 252-amino-acid chain: uncharacterized protein (252 aa).

An N-terminal signal peptide occupies residues methionine 1–alanine 22. Cysteine 23 is lipidated: N-palmitoyl cysteine. Residue cysteine 23 is the site of S-diacylglycerol cysteine attachment.

This sequence belongs to the staphylococcal tandem lipoprotein family.

The protein resides in the cell membrane. This is an uncharacterized protein from Staphylococcus aureus (strain MW2).